Reading from the N-terminus, the 431-residue chain is Isocitrate lyase (431 aa).

A disordered region spans residues 1–21 (MSNVGTPRTAQEIQQDWDTNP). A substrate-binding site is contributed by 93–95 (SGW). Asp155 contacts Mg(2+). The active-site Proton acceptor is Cys193. Residues 194–195 (GH), Arg230, 315–319 (NCSPS), and Thr349 contribute to the substrate site.

Belongs to the isocitrate lyase/PEP mutase superfamily. Isocitrate lyase family. Homotetramer. Mg(2+) serves as cofactor.

It carries out the reaction D-threo-isocitrate = glyoxylate + succinate. It participates in carbohydrate metabolism; glyoxylate cycle; (S)-malate from isocitrate: step 1/2. In terms of biological role, involved in the metabolic adaptation in response to environmental changes. Catalyzes the reversible formation of succinate and glyoxylate from isocitrate, a key step of the glyoxylate cycle, which operates as an anaplerotic route for replenishing the tricarboxylic acid cycle during growth on fatty acid substrates. The polypeptide is Isocitrate lyase (aceA) (Corynebacterium efficiens (strain DSM 44549 / YS-314 / AJ 12310 / JCM 11189 / NBRC 100395)).